A 227-amino-acid chain; its full sequence is Protein p26 (227 aa).

As to quaternary structure, self-associates.

The protein localises to the host cell junction. The protein resides in the host plasmodesma. The chain is Protein p26 from Lettuce infectious yellows virus (isolate United States/92) (LIYV).